Reading from the N-terminus, the 354-residue chain is Probable butyrate kinase 2 (354 aa).

The protein belongs to the acetokinase family.

Its subcellular location is the cytoplasm. The catalysed reaction is butanoate + ATP = butanoyl phosphate + ADP. The polypeptide is Probable butyrate kinase 2 (Caldanaerobacter subterraneus subsp. tengcongensis (strain DSM 15242 / JCM 11007 / NBRC 100824 / MB4) (Thermoanaerobacter tengcongensis)).